Reading from the N-terminus, the 708-residue chain is MLKLFSAFRKNKIWDFNGGIHPPEMKTQSNGTPLRQVPLAQRFVIPLKQHIGAEGELCVSVGDKVLRGQPLTRGRGKMLPVHAPTSGTVTAIAPHSTAHPSALAELSVIIDADGEDCWIPRDGWADYRTRSREELIERIHQFGVAGLGGAGFPTGVKLQGGGDKIETLIINAAECEPYITADDRLMQDCAAQLVEGIRILAHILQPREILIGIEDNKPQAISMLRAVLADSNDISLRVIPTKYPSGGAKQLTYILTGKQVPHGGRSSDIGVLMQNVGTAYAVKRAVIDGEPITERVVTLTGEAIARPGNVWARLGTPVRHLLNDARFCPSADQMVIMGGPLMGFTLPWLDVPVVKITNCLLAPSANELGEPQEEQSCIRCSACADACPADLLPQQLYWFSKGQQHDKATTHNIADCIECGACAWVCPSNIPLVQYFRQEKAEIAAIRQEEKRAAEAKARFEARQARLEREKAARLERHKSAAVQPAAKDKDAIAAALARVKEKQAQATQPIVIKAGERPDNSAIIAAREARKAQARAKQAELQQTNDAATVADPRKTAVEAAIARAKARKLEQQQANAEPEEQVDPRKAAIEAAIARAKARKLEQQQANAEPEEQVDPRKAAVEAAIARAKARKLEQQQANAVPEEQVDPRKAAVEAAIARAKARKLEQQQTNAEPEEQVDPRKAAVAAAIARAQAKKAAQQKVVNED.

4Fe-4S ferredoxin-type domains are found at residues 369–397 (GEPQ…QQLY) and 407–436 (KATT…VQYF). [4Fe-4S] cluster is bound by residues cysteine 377, cysteine 380, cysteine 383, cysteine 387, cysteine 416, cysteine 419, cysteine 422, and cysteine 426. The segment at 663-684 (KARKLEQQQTNAEPEEQVDPRK) is disordered.

It belongs to the 4Fe4S bacterial-type ferredoxin family. RnfC subfamily. In terms of assembly, the complex is composed of six subunits: RsxA, RsxB, RsxC, RsxD, RsxE and RsxG. [4Fe-4S] cluster serves as cofactor.

The protein localises to the cell inner membrane. Its function is as follows. Part of a membrane-bound complex that couples electron transfer with translocation of ions across the membrane. Required to maintain the reduced state of SoxR. This chain is Ion-translocating oxidoreductase complex subunit C, found in Shigella boydii serotype 18 (strain CDC 3083-94 / BS512).